The following is a 156-amino-acid chain: Lipoprotein signal peptidase (156 aa).

A run of 4 helical transmembrane segments spans residues 8 to 28, 39 to 59, 67 to 87, and 99 to 119; these read IYIN…KWIL, VFFI…SILS, YFLL…MIKF, and SLIL…GFVI. Catalysis depends on residues D120 and D138. A helical transmembrane segment spans residues 129–149; that stretch reads WHFATFNIADFSIFIGMIMII.

The protein belongs to the peptidase A8 family.

It is found in the cell inner membrane. It carries out the reaction Release of signal peptides from bacterial membrane prolipoproteins. Hydrolyzes -Xaa-Yaa-Zaa-|-(S,diacylglyceryl)Cys-, in which Xaa is hydrophobic (preferably Leu), and Yaa (Ala or Ser) and Zaa (Gly or Ala) have small, neutral side chains.. Its pathway is protein modification; lipoprotein biosynthesis (signal peptide cleavage). Functionally, this protein specifically catalyzes the removal of signal peptides from prolipoproteins. In Buchnera aphidicola subsp. Schizaphis graminum (strain Sg), this protein is Lipoprotein signal peptidase.